The sequence spans 635 residues: Early transcription factor 70 kDa subunit (635 aa).

In terms of domain architecture, Helicase ATP-binding spans 32–185 (RSILDENNSV…SNIISIMSDE (154 aa)). 45–52 (HIMGSGKT) provides a ligand contact to ATP. The short motif at 135-138 (DEAH) is the DEXH box element.

The protein belongs to the helicase family. VETF subfamily. Heterodimer of a 70 kDa and a 82 kDa subunit. Part of the early transcription complex composed of ETF, RAP94, and the DNA-directed RNA polymerase.

Its subcellular location is the virion. Functionally, acts with RNA polymerase to initiate transcription from early gene promoters. Is recruited by the RPO-associated protein of 94 kDa (RAP94) to form the early transcription complex, which also contains the core RNA polymerase. ETF heterodimer binds to early gene promoters. This chain is Early transcription factor 70 kDa subunit (VETFS), found in Homo sapiens (Human).